The following is a 443-amino-acid chain: MKIGIINTKIRTVFSAFACMIAASLVCTMPARAVVEININKGVIEPLPIAITDFLSADQLGSNITSVIAADLERSGLFAPIDKGAFIEKISNPDAAPRFEDWKVINAQALVTGRITKQPDGRLKAEFHLWDTFGGQRMIGQQFFTTPDNWRRVAHIIADAIYERLTGDKGYFDTRVVFVDESGPAQKRVKRLAIMDQDGANVRFISDGRALSLTPRFSPNRQEVTYMSFEGGSPKVYLLQLETGQRELVGNFPGMTIAPRFSPDGQKVVMSLLQDDGSANIYTMDLRNRTTTRLTSSQAIDTGASYSPDGSQIVFTSDRGGRPQLYVMGADGSNPRRISMGDGSYSTPVWSPRGDLIAFTKQSQGQFSIGVMKTDGSGERLLTSGFHNEGPTWAPNGRVLMFFRKAAGAGGPKLFTIDLTGRNERQIQTPNFASDPAWSPLLE.

An N-terminal signal peptide occupies residues 1 to 33 (MKIGIINTKIRTVFSAFACMIAASLVCTMPARA).

This sequence belongs to the TolB family. The Tol-Pal system is composed of five core proteins: the inner membrane proteins TolA, TolQ and TolR, the periplasmic protein TolB and the outer membrane protein Pal. They form a network linking the inner and outer membranes and the peptidoglycan layer.

The protein localises to the periplasm. Functionally, part of the Tol-Pal system, which plays a role in outer membrane invagination during cell division and is important for maintaining outer membrane integrity. The sequence is that of Tol-Pal system protein TolB from Brucella canis (strain ATCC 23365 / NCTC 10854 / RM-666).